The sequence spans 207 residues: Protein LURP1 (207 aa).

The protein belongs to the LOR family. In terms of tissue distribution, limited to discrete pathogen infection sites in leaves.

In terms of biological role, involved in basal defense against virulent oomycetes. Might be related to the phospholipid scramblase and tubby-like superfamily of membrane tethered transcription factors. The polypeptide is Protein LURP1 (LURP1) (Arabidopsis thaliana (Mouse-ear cress)).